A 1763-amino-acid chain; its full sequence is Non-reducing polyketide synthase PKS19 (1763 aa).

The N-terminal acylcarrier protein transacylase domain (SAT) stretch occupies residues 20-261 (GDQRNLFRKL…PMKKVQGMWH (242 aa)). In terms of domain architecture, Ketosynthase family 3 (KS3) spans 390 to 822 (SSKIAVVGMA…GGNTSIIIEE (433 aa)). Residues Cys-561, His-696, and His-740 each act as for beta-ketoacyl synthase activity in the active site. Residues 922–1227 (FAFTGQGTFY…QRDTDNWLTL (306 aa)) form a malonyl-CoA:ACP transacylase (MAT) domain region. Residues 1307-1439 (HRLISEQYTD…VFYEDPSSWL (133 aa)) form an N-terminal hotdog fold region. The PKS/mFAS DH domain maps to 1307-1609 (HRLISEQYTD…FLQWPRVMLN (303 aa)). The tract at residues 1334–1588 (GVVDGHAMNG…FVGDVYVLQG (255 aa)) is product template (PT) domain. His-1339 acts as the Proton acceptor; for dehydratase activity in catalysis. Residues 1461–1609 (VTGKASKLTT…FLQWPRVMLN (149 aa)) are C-terminal hotdog fold. The active-site Proton donor; for dehydratase activity is the Asp-1522. The interval 1619–1690 (AKPAAKVPGK…MEELPSPPAG (72 aa)) is disordered. Over residues 1635 to 1647 (PHFKPHHVSRHKP) the composition is skewed to basic residues. The 75-residue stretch at 1689 to 1763 (AGMNDDMEKA…TIQDLKALLR (75 aa)) folds into the Carrier domain. Position 1726 is an O-(pantetheine 4'-phosphoryl)serine (Ser-1726).

In terms of biological role, non-reducing polyketide synthase that mediates the biosynthesis of alternariol (AOH), a micotoxin that seems not to be involved in virulence and oxidative stress tolerance. PKS19 alone is sufficient for AOH synthesis which is initiated by priming with acetyl-CoA, followed by sequential condensations of 6 malonyl-CoA units. The polypeptide is Non-reducing polyketide synthase PKS19 (Phaeosphaeria nodorum (strain SN15 / ATCC MYA-4574 / FGSC 10173) (Glume blotch fungus)).